The chain runs to 428 residues: Cytochrome bc complex cytochrome b subunit (428 aa).

2 stretches are compositionally biased toward low complexity: residues 1 to 15 (MAEN…TAPA) and 21 to 52 (APGA…AAAP). The interval 1–72 (MAENTPKPAA…RPDPNPFKDS (72 aa)) is disordered. Residues 59–72 (PPVDRPDPNPFKDS) are compositionally biased toward basic and acidic residues. The chain crosses the membrane as a helical span at residues 110–130 (YFGGLGLFFFVIQILTGLLLL). Heme b contacts are provided by His-161 and His-175. 6 helical membrane-spanning segments follow: residues 162-182 (AWSA…TFFM), 193-213 (WVSG…GYLL), 260-280 (LHVV…LTLV), 312-331 (GIGW…MFPW), 369-389 (ELLA…VPFI), and 401-421 (IFTI…YRVY). Heme b is bound by residues His-261 and His-276.

The protein belongs to the cytochrome b family. It depends on heme b as a cofactor.

Its subcellular location is the cell inner membrane. In terms of biological role, component of the green S-bacteria bc complex, which consists of the Rieske protein and cytochrome b subunit but appears to lack a cytochrome c1-equivalent. This complex has a comparatively low redox potential. The polypeptide is Cytochrome bc complex cytochrome b subunit (petB) (Chlorobaculum thiosulfatiphilum (Chlorobium limicola f.sp. thiosulfatophilum)).